The sequence spans 473 residues: Bifunctional protein HldE (473 aa).

Residues 1-318 form a ribokinase region; sequence MKLSMPRFDQ…RAIQREEGSE (318 aa). 194-197 lines the ATP pocket; that stretch reads NLSE. The active site involves Asp-263. A cytidylyltransferase region spans residues 343 to 473; that stretch reads FTNGCFDILH…TAIVEKIRKN (131 aa).

It in the N-terminal section; belongs to the carbohydrate kinase PfkB family. In the C-terminal section; belongs to the cytidylyltransferase family. In terms of assembly, homodimer.

It carries out the reaction D-glycero-beta-D-manno-heptose 7-phosphate + ATP = D-glycero-beta-D-manno-heptose 1,7-bisphosphate + ADP + H(+). The enzyme catalyses D-glycero-beta-D-manno-heptose 1-phosphate + ATP + H(+) = ADP-D-glycero-beta-D-manno-heptose + diphosphate. The protein operates within nucleotide-sugar biosynthesis; ADP-L-glycero-beta-D-manno-heptose biosynthesis; ADP-L-glycero-beta-D-manno-heptose from D-glycero-beta-D-manno-heptose 7-phosphate: step 1/4. It functions in the pathway nucleotide-sugar biosynthesis; ADP-L-glycero-beta-D-manno-heptose biosynthesis; ADP-L-glycero-beta-D-manno-heptose from D-glycero-beta-D-manno-heptose 7-phosphate: step 3/4. Catalyzes the phosphorylation of D-glycero-D-manno-heptose 7-phosphate at the C-1 position to selectively form D-glycero-beta-D-manno-heptose-1,7-bisphosphate. Its function is as follows. Catalyzes the ADP transfer from ATP to D-glycero-beta-D-manno-heptose 1-phosphate, yielding ADP-D-glycero-beta-D-manno-heptose. The chain is Bifunctional protein HldE from Pseudomonas putida (strain ATCC 47054 / DSM 6125 / CFBP 8728 / NCIMB 11950 / KT2440).